The primary structure comprises 442 residues: Tubulin beta chain (442 aa).

8 residues coordinate GTP: Gln11, Glu69, Ser138, Gly142, Thr143, Gly144, Asn204, and Asn226. Glu69 provides a ligand contact to Mg(2+).

It belongs to the tubulin family. Dimer of alpha and beta chains. A typical microtubule is a hollow water-filled tube with an outer diameter of 25 nm and an inner diameter of 15 nM. Alpha-beta heterodimers associate head-to-tail to form protofilaments running lengthwise along the microtubule wall with the beta-tubulin subunit facing the microtubule plus end conferring a structural polarity. Microtubules usually have 13 protofilaments but different protofilament numbers can be found in some organisms and specialized cells. Requires Mg(2+) as cofactor.

It localises to the cytoplasm. Its subcellular location is the cytoskeleton. Tubulin is the major constituent of microtubules, a cylinder consisting of laterally associated linear protofilaments composed of alpha- and beta-tubulin heterodimers. Microtubules grow by the addition of GTP-tubulin dimers to the microtubule end, where a stabilizing cap forms. Below the cap, tubulin dimers are in GDP-bound state, owing to GTPase activity of alpha-tubulin. This Pneumocystis carinii protein is Tubulin beta chain (TUB-B).